The following is a 442-amino-acid chain: Glutamate--tRNA ligase 1 (442 aa).

Residues 9–19 (PSPTGKLHVGN) carry the 'HIGH' region motif. The short motif at 240–244 (KLSKR) is the 'KMSKS' region element. Lysine 243 is an ATP binding site.

This sequence belongs to the class-I aminoacyl-tRNA synthetase family. Glutamate--tRNA ligase type 1 subfamily. In terms of assembly, monomer.

It localises to the cytoplasm. It carries out the reaction tRNA(Glu) + L-glutamate + ATP = L-glutamyl-tRNA(Glu) + AMP + diphosphate. Catalyzes the attachment of glutamate to tRNA(Glu) in a two-step reaction: glutamate is first activated by ATP to form Glu-AMP and then transferred to the acceptor end of tRNA(Glu). The chain is Glutamate--tRNA ligase 1 from Novosphingobium aromaticivorans (strain ATCC 700278 / DSM 12444 / CCUG 56034 / CIP 105152 / NBRC 16084 / F199).